Reading from the N-terminus, the 134-residue chain is Small ribosomal subunit protein uS8c (134 aa).

Belongs to the universal ribosomal protein uS8 family. As to quaternary structure, part of the 30S ribosomal subunit.

It localises to the plastid. The protein resides in the chloroplast. Functionally, one of the primary rRNA binding proteins, it binds directly to 16S rRNA central domain where it helps coordinate assembly of the platform of the 30S subunit. This is Small ribosomal subunit protein uS8c (rps8) from Nicotiana tabacum (Common tobacco).